Reading from the N-terminus, the 27-residue chain is Nucleoside diphosphate kinase 2 (27 aa).

ATP is bound at residue Lys3.

It belongs to the NDK family. Mg(2+) is required as a cofactor.

The catalysed reaction is a 2'-deoxyribonucleoside 5'-diphosphate + ATP = a 2'-deoxyribonucleoside 5'-triphosphate + ADP. It catalyses the reaction a ribonucleoside 5'-diphosphate + ATP = a ribonucleoside 5'-triphosphate + ADP. Functionally, major role in the synthesis of nucleoside triphosphates other than ATP. The ATP gamma phosphate is transferred to the NDP beta phosphate via a ping-pong mechanism, using a phosphorylated active-site intermediate. The chain is Nucleoside diphosphate kinase 2 from Pseudotsuga menziesii (Douglas-fir).